The chain runs to 264 residues: 3-methyl-2-oxobutanoate hydroxymethyltransferase (264 aa).

Mg(2+) contacts are provided by D45 and D84. 3-methyl-2-oxobutanoate is bound by residues 45 to 46, D84, and K112; that span reads DS. Position 114 (E114) interacts with Mg(2+). The Proton acceptor role is filled by E181.

It belongs to the PanB family. As to quaternary structure, homodecamer; pentamer of dimers. Requires Mg(2+) as cofactor.

It localises to the cytoplasm. The catalysed reaction is 3-methyl-2-oxobutanoate + (6R)-5,10-methylene-5,6,7,8-tetrahydrofolate + H2O = 2-dehydropantoate + (6S)-5,6,7,8-tetrahydrofolate. It participates in cofactor biosynthesis; (R)-pantothenate biosynthesis; (R)-pantoate from 3-methyl-2-oxobutanoate: step 1/2. Its function is as follows. Catalyzes the reversible reaction in which hydroxymethyl group from 5,10-methylenetetrahydrofolate is transferred onto alpha-ketoisovalerate to form ketopantoate. The chain is 3-methyl-2-oxobutanoate hydroxymethyltransferase from Aeromonas hydrophila subsp. hydrophila (strain ATCC 7966 / DSM 30187 / BCRC 13018 / CCUG 14551 / JCM 1027 / KCTC 2358 / NCIMB 9240 / NCTC 8049).